The primary structure comprises 429 residues: Chaperone SurA (429 aa).

The first 18 residues, 1–18 (MFKRIALVCALFSGICFA), serve as a signal peptide directing secretion. PpiC domains follow at residues 170–271 (NLTY…KLVA) and 281–380 (ITQT…EVIA).

It is found in the periplasm. The enzyme catalyses [protein]-peptidylproline (omega=180) = [protein]-peptidylproline (omega=0). In terms of biological role, chaperone involved in the correct folding and assembly of outer membrane proteins. Recognizes specific patterns of aromatic residues and the orientation of their side chains, which are found more frequently in integral outer membrane proteins. May act in both early periplasmic and late outer membrane-associated steps of protein maturation. In Legionella pneumophila (strain Paris), this protein is Chaperone SurA.